The primary structure comprises 350 residues: MPLVAHRELESLDRLRAEGQEILDVRRASQQDIRELHIGLLNLMPDGALKATERQFLRLIGNSNRIAQFYVHIFTVPGVPRSADMQAYIDSHYENFDDLAHDGLDAIIFTGTNPLHADLAQEAYWPHVQRVFDWADKNVTSVLCSCLASHLALQHFHGIARKRRDEKLFGVFSHRVLDRSHPMLANINTRFDMPHSRWNGISAAQLEARGLPVLVAGEESGVAMASSPDGFRQIYFQGHPEYDRSSLLKEFRRDLALYQDGKLPQPPKLPTHYFTPAGQRLIRDYIESGRPISDFPEAQLADEVDVTWRDTAKALFANWLGLVYQLTHKERHLQYMDGIDPADPLGRLRR.

Residue cysteine 146 is the Acyl-thioester intermediate of the active site. 2 residues coordinate substrate: lysine 167 and serine 196. Histidine 239 functions as the Proton acceptor in the catalytic mechanism. Residue glutamate 241 is part of the active site. A substrate-binding site is contributed by arginine 253.

It belongs to the MetA family.

The protein localises to the cytoplasm. The catalysed reaction is L-homoserine + succinyl-CoA = O-succinyl-L-homoserine + CoA. The protein operates within amino-acid biosynthesis; L-methionine biosynthesis via de novo pathway; O-succinyl-L-homoserine from L-homoserine: step 1/1. Its function is as follows. Transfers a succinyl group from succinyl-CoA to L-homoserine, forming succinyl-L-homoserine. This is Homoserine O-succinyltransferase from Cardiobacterium hominis (strain ATCC 15826 / DSM 8339 / NCTC 10426 / 6573).